Here is a 457-residue protein sequence, read N- to C-terminus: Protein unc-93 homolog A (457 aa).

Transmembrane regions (helical) follow at residues 8 to 28 (VLVL…LQSL), 42 to 62 (ALST…PVLI), 65 to 85 (LGCK…SLGN), 86 to 106 (FYAS…GAAA), and 140 to 160 (IFFL…SLVF). Asn190 carries N-linked (GlcNAc...) asparagine glycosylation. A run of 6 helical transmembrane segments spans residues 202–222 (TLLG…AVFL), 257–277 (LRLL…LSGD), 291–311 (FVGY…VLFG), 320–340 (TVLF…LLLW), 344–364 (PSQL…DAVW), and 395–415 (FVIA…YVLL). The disordered stretch occupies residues 438-457 (GPLAAGRTKPAEDGATQTKL).

Belongs to the unc-93 family.

The protein resides in the cell membrane. In Bos taurus (Bovine), this protein is Protein unc-93 homolog A (UNC93A).